The following is a 439-amino-acid chain: Diaminopimelate decarboxylase (439 aa).

Lys-66 carries the post-translational modification N6-(pyridoxal phosphate)lysine. Pyridoxal 5'-phosphate-binding positions include Gly-248 and 290–293 (EPGR). Residues Arg-293, Arg-330, and Tyr-334 each contribute to the substrate site. Cys-361 acts as the Proton donor in catalysis. Substrate-binding residues include Glu-362 and Tyr-390. Tyr-390 provides a ligand contact to pyridoxal 5'-phosphate.

This sequence belongs to the Orn/Lys/Arg decarboxylase class-II family. LysA subfamily. In terms of assembly, homodimer. Requires pyridoxal 5'-phosphate as cofactor.

The catalysed reaction is meso-2,6-diaminopimelate + H(+) = L-lysine + CO2. It functions in the pathway amino-acid biosynthesis; L-lysine biosynthesis via DAP pathway; L-lysine from DL-2,6-diaminopimelate: step 1/1. Its function is as follows. Specifically catalyzes the decarboxylation of meso-diaminopimelate (meso-DAP) to L-lysine. In Halalkalibacterium halodurans (strain ATCC BAA-125 / DSM 18197 / FERM 7344 / JCM 9153 / C-125) (Bacillus halodurans), this protein is Diaminopimelate decarboxylase.